A 700-amino-acid chain; its full sequence is Dymeclin (700 aa).

Gly-2 carries the N-myristoyl glycine lipid modification. Ser-347 carries the phosphoserine modification.

It belongs to the dymeclin family.

The chain is Dymeclin from Drosophila pseudoobscura pseudoobscura (Fruit fly).